A 151-amino-acid chain; its full sequence is Transcriptional repressor NrdR (151 aa).

A zinc finger spans residues 3 to 34 (CPKCGSLNDKVLETRQSKEGVVIKRRRECLNC). In terms of domain architecture, ATP-cone spans 49–139 (IEVIKKNNTV…VFDGFEDIKD (91 aa)).

It belongs to the NrdR family. It depends on Zn(2+) as a cofactor.

In terms of biological role, negatively regulates transcription of bacterial ribonucleotide reductase nrd genes and operons by binding to NrdR-boxes. The protein is Transcriptional repressor NrdR of Sulfurihydrogenibium sp. (strain YO3AOP1).